A 259-amino-acid chain; its full sequence is 3-methyl-2-oxobutanoate hydroxymethyltransferase (259 aa).

2 residues coordinate Mg(2+): D44 and D83. Residues 44–45 (DS), D83, and K112 each bind 3-methyl-2-oxobutanoate. Position 114 (E114) interacts with Mg(2+). E177 serves as the catalytic Proton acceptor.

Belongs to the PanB family. In terms of assembly, homodecamer; pentamer of dimers. Mg(2+) serves as cofactor.

It localises to the cytoplasm. It catalyses the reaction 3-methyl-2-oxobutanoate + (6R)-5,10-methylene-5,6,7,8-tetrahydrofolate + H2O = 2-dehydropantoate + (6S)-5,6,7,8-tetrahydrofolate. It functions in the pathway cofactor biosynthesis; (R)-pantothenate biosynthesis; (R)-pantoate from 3-methyl-2-oxobutanoate: step 1/2. Functionally, catalyzes the reversible reaction in which hydroxymethyl group from 5,10-methylenetetrahydrofolate is transferred onto alpha-ketoisovalerate to form ketopantoate. The chain is 3-methyl-2-oxobutanoate hydroxymethyltransferase from Nitratiruptor sp. (strain SB155-2).